A 359-amino-acid polypeptide reads, in one-letter code: Cytohesin-interacting protein (359 aa).

In terms of domain architecture, PDZ spans 77-166 (VVTVEKQDNG…LLTIETLNGT (90 aa)). A coiled-coil region spans residues 165 to 188 (GTMIHRRAELEAKLQTLKQTLKKK). Positions 166–188 (TMIHRRAELEAKLQTLKQTLKKK) are interaction with CYTH1.

In terms of assembly, interacts with CYTH1 and SNX27.

It localises to the cytoplasm. Its subcellular location is the early endosome. By its binding to cytohesin-1 (CYTH1), it modifies activation of ARFs by CYTH1 and its precise function may be to sequester CYTH1 in the cytoplasm. The chain is Cytohesin-interacting protein (Cytip) from Mus musculus (Mouse).